The following is a 356-amino-acid chain: Thymidine kinase (356 aa).

A disordered region spans residues 1–29 (MMDSRATYVPPKKISESNSNAEEDPTDCS). 61 to 68 (GCVGVGKT) lines the ATP pocket. Glu86 acts as the Proton acceptor in catalysis. Gln122 is a substrate binding site. Residue Arg208 coordinates ATP. Arg214 is a binding site for substrate.

Belongs to the herpesviridae thymidine kinase family. Homodimer.

The catalysed reaction is thymidine + ATP = dTMP + ADP + H(+). Functionally, catalyzes the transfer of the gamma-phospho group of ATP to thymidine to generate dTMP in the salvage pathway of pyrimidine synthesis. The dTMP serves as a substrate for DNA polymerase during viral DNA replication. Allows the virus to be reactivated and to grow in non-proliferative cells lacking a high concentration of phosphorylated nucleic acid precursors. This Elephas maximus (Indian elephant) protein is Thymidine kinase.